The primary structure comprises 317 residues: Transaldolase (317 aa).

K132 serves as the catalytic Schiff-base intermediate with substrate.

Belongs to the transaldolase family. Type 1 subfamily. In terms of assembly, homodimer.

It localises to the cytoplasm. The catalysed reaction is D-sedoheptulose 7-phosphate + D-glyceraldehyde 3-phosphate = D-erythrose 4-phosphate + beta-D-fructose 6-phosphate. It functions in the pathway carbohydrate degradation; pentose phosphate pathway; D-glyceraldehyde 3-phosphate and beta-D-fructose 6-phosphate from D-ribose 5-phosphate and D-xylulose 5-phosphate (non-oxidative stage): step 2/3. Functionally, transaldolase is important for the balance of metabolites in the pentose-phosphate pathway. This is Transaldolase from Actinobacillus succinogenes (strain ATCC 55618 / DSM 22257 / CCUG 43843 / 130Z).